A 350-amino-acid polypeptide reads, in one-letter code: Biotin synthase (350 aa).

One can recognise a Radical SAM core domain in the interval 42–269 (NEVQVSTLCS…QSHVRLSAGR (228 aa)). Cys-57, Cys-61, and Cys-64 together coordinate [4Fe-4S] cluster. The [2Fe-2S] cluster site is built by Cys-101, Cys-132, Cys-192, and Arg-264.

The protein belongs to the radical SAM superfamily. Biotin synthase family. In terms of assembly, homodimer. Requires [4Fe-4S] cluster as cofactor. It depends on [2Fe-2S] cluster as a cofactor.

It catalyses the reaction (4R,5S)-dethiobiotin + (sulfur carrier)-SH + 2 reduced [2Fe-2S]-[ferredoxin] + 2 S-adenosyl-L-methionine = (sulfur carrier)-H + biotin + 2 5'-deoxyadenosine + 2 L-methionine + 2 oxidized [2Fe-2S]-[ferredoxin]. It participates in cofactor biosynthesis; biotin biosynthesis; biotin from 7,8-diaminononanoate: step 2/2. Functionally, catalyzes the conversion of dethiobiotin (DTB) to biotin by the insertion of a sulfur atom into dethiobiotin via a radical-based mechanism. The sequence is that of Biotin synthase from Saccharophagus degradans (strain 2-40 / ATCC 43961 / DSM 17024).